The following is a 256-amino-acid chain: Adenosylcobinamide-GDP ribazoletransferase (256 aa).

6 consecutive transmembrane segments (helical) span residues 40–60 (YFPL…WLVL), 64–84 (PAQG…TGAF), 114–134 (IGAF…QLLS), 143–163 (ILVA…SHLL), 194–214 (VVPL…GLIL), and 234–254 (CLGM…LAWM).

Belongs to the CobS family. It depends on Mg(2+) as a cofactor.

The protein resides in the cell inner membrane. The enzyme catalyses alpha-ribazole + adenosylcob(III)inamide-GDP = adenosylcob(III)alamin + GMP + H(+). The catalysed reaction is alpha-ribazole 5'-phosphate + adenosylcob(III)inamide-GDP = adenosylcob(III)alamin 5'-phosphate + GMP + H(+). Its pathway is cofactor biosynthesis; adenosylcobalamin biosynthesis; adenosylcobalamin from cob(II)yrinate a,c-diamide: step 7/7. Joins adenosylcobinamide-GDP and alpha-ribazole to generate adenosylcobalamin (Ado-cobalamin). Also synthesizes adenosylcobalamin 5'-phosphate from adenosylcobinamide-GDP and alpha-ribazole 5'-phosphate. In Ralstonia pickettii (strain 12J), this protein is Adenosylcobinamide-GDP ribazoletransferase.